The sequence spans 324 residues: Cuticle collagen sqt-1 (324 aa).

Disordered regions lie at residues 68–108 (RRQY…TPNG) and 129–324 (SGPK…YRNI). Over residues 87–97 (SAPPGQPPAVP) the composition is skewed to pro residues. Triple-helical region regions lie at residues 127–153 (GPSG…PGVG), 171–231 (QGPV…KGRD), and 237–299 (GRPG…PGKD). Composition is skewed to low complexity over residues 129–156 (SGPK…GADD) and 177–201 (PGAL…PGRD). The span at 227–236 (EKGRDAEHPI) shows a compositional bias: basic and acidic residues.

Belongs to the cuticular collagen family. Collagen polypeptide chains are complexed within the cuticle by disulfide bonds and other types of covalent cross-links.

Nematode cuticles are composed largely of collagen-like proteins. The cuticle functions both as an exoskeleton and as a barrier to protect the worm from its environment. This is a collagen critical for organismal morphogenesis. Mutations in sqt-1 can lengthen, shorten, or helically twist the entire animal. This is Cuticle collagen sqt-1 (sqt-1) from Caenorhabditis elegans.